The following is a 253-amino-acid chain: Triosephosphate isomerase (253 aa).

A substrate-binding site is contributed by 9–11 (NWK). H95 acts as the Electrophile in catalysis. Residue E167 is the Proton acceptor of the active site. Substrate is bound by residues G173, S213, and 234–235 (GG). At S213 the chain carries Phosphoserine.

The protein belongs to the triosephosphate isomerase family. Homodimer.

It localises to the cytoplasm. The catalysed reaction is D-glyceraldehyde 3-phosphate = dihydroxyacetone phosphate. Its pathway is carbohydrate biosynthesis; gluconeogenesis. It participates in carbohydrate degradation; glycolysis; D-glyceraldehyde 3-phosphate from glycerone phosphate: step 1/1. Involved in the gluconeogenesis. Catalyzes stereospecifically the conversion of dihydroxyacetone phosphate (DHAP) to D-glyceraldehyde-3-phosphate (G3P). This chain is Triosephosphate isomerase, found in Bacillus licheniformis (strain ATCC 14580 / DSM 13 / JCM 2505 / CCUG 7422 / NBRC 12200 / NCIMB 9375 / NCTC 10341 / NRRL NRS-1264 / Gibson 46).